Here is a 249-residue protein sequence, read N- to C-terminus: Aspartate/glutamate leucyltransferase (249 aa).

This sequence belongs to the R-transferase family. Bpt subfamily.

It is found in the cytoplasm. The enzyme catalyses N-terminal L-glutamyl-[protein] + L-leucyl-tRNA(Leu) = N-terminal L-leucyl-L-glutamyl-[protein] + tRNA(Leu) + H(+). It carries out the reaction N-terminal L-aspartyl-[protein] + L-leucyl-tRNA(Leu) = N-terminal L-leucyl-L-aspartyl-[protein] + tRNA(Leu) + H(+). Functions in the N-end rule pathway of protein degradation where it conjugates Leu from its aminoacyl-tRNA to the N-termini of proteins containing an N-terminal aspartate or glutamate. This is Aspartate/glutamate leucyltransferase from Brucella abortus (strain 2308).